The chain runs to 1154 residues: Coiled-coil domain-containing protein 136 (1154 aa).

Residues Met-1–His-48 are disordered. The segment covering Tyr-14–Glu-32 has biased composition (acidic residues). At Ser-52 the chain carries Phosphoserine. 2 coiled-coil regions span residues Gln-696–Gln-733 and Lys-859–Val-974. A compositionally biased stretch (basic and acidic residues) spans Asp-1031 to Cys-1058. A disordered region spans residues Asp-1031–Phe-1131. Positions Asp-1077 to Glu-1109 are enriched in acidic residues. Residues Ile-1130–Ala-1150 form a helical membrane-spanning segment.

In terms of tissue distribution, expressed in gastric tissues. Down-regulated in gastric cancer.

It is found in the cytoplasmic vesicle. The protein localises to the secretory vesicle. It localises to the acrosome membrane. Its function is as follows. May play a role in acrosome formation in spermatogenesis and in fertilization. This chain is Coiled-coil domain-containing protein 136 (CCDC136), found in Homo sapiens (Human).